The following is a 423-amino-acid chain: Serine--tRNA ligase (423 aa).

231 to 233 contributes to the L-serine binding site; that stretch reads TAE. 262-264 lines the ATP pocket; sequence RSE. Glutamate 285 is an L-serine binding site. 349 to 352 contributes to the ATP binding site; sequence EISS. Serine 384 serves as a coordination point for L-serine.

This sequence belongs to the class-II aminoacyl-tRNA synthetase family. Type-1 seryl-tRNA synthetase subfamily. As to quaternary structure, homodimer. The tRNA molecule binds across the dimer.

The protein localises to the cytoplasm. It catalyses the reaction tRNA(Ser) + L-serine + ATP = L-seryl-tRNA(Ser) + AMP + diphosphate + H(+). It carries out the reaction tRNA(Sec) + L-serine + ATP = L-seryl-tRNA(Sec) + AMP + diphosphate + H(+). Its pathway is aminoacyl-tRNA biosynthesis; selenocysteinyl-tRNA(Sec) biosynthesis; L-seryl-tRNA(Sec) from L-serine and tRNA(Sec): step 1/1. Catalyzes the attachment of serine to tRNA(Ser). Is also able to aminoacylate tRNA(Sec) with serine, to form the misacylated tRNA L-seryl-tRNA(Sec), which will be further converted into selenocysteinyl-tRNA(Sec). The polypeptide is Serine--tRNA ligase (Lactococcus lactis subsp. cremoris (strain SK11)).